The following is a 214-amino-acid chain: Redox-sensing transcriptional repressor Rex (214 aa).

A DNA-binding region (H-T-H motif) is located at residues 17–56; that stretch reads LYYRIFKRFHADQVEKASSKQIADAMGIDSATVRRDFSYF. NAD(+) is bound at residue 91 to 96; that stretch reads GCGNIG.

This sequence belongs to the transcriptional regulatory Rex family. In terms of assembly, homodimer.

It is found in the cytoplasm. Functionally, modulates transcription in response to changes in cellular NADH/NAD(+) redox state. In Streptococcus pyogenes serotype M12 (strain MGAS9429), this protein is Redox-sensing transcriptional repressor Rex.